Here is a 355-residue protein sequence, read N- to C-terminus: Poly(3-hydroxyalkanoate) polymerase subunit PhaC (355 aa).

Positions P68–I333 constitute an AB hydrolase-1 domain. Residue C148 is part of the active site.

Belongs to the PHA/PHB synthase family. Type III PhaC subfamily. In terms of assembly, forms a heterodimer with PhaE, which may multimerize in the presence of 3-hydroxybutyryl-CoA.

It localises to the cytoplasm. It carries out the reaction (3R)-3-hydroxybutanoyl-CoA + [(3R)-hydroxybutanoate](n) = [(3R)-hydroxybutanoate](n+1) + CoA. Its pathway is biopolymer metabolism; poly-(R)-3-hydroxybutanoate biosynthesis. Functionally, polymerizes D(-)-3-hydroxybutyryl-CoA to create PHB which consists of thousands of hydroxybutyrate molecules linked end to end. PHB serves as an intracellular energy reserve material when cells grow under conditions of nutrient limitation. This is Poly(3-hydroxyalkanoate) polymerase subunit PhaC from Thiocystis violacea.